The chain runs to 367 residues: tRNA-specific 2-thiouridylase MnmA (367 aa).

ATP is bound by residues 10–17 (AMSGGVDS) and methionine 36. Cysteine 106 serves as the catalytic Nucleophile. A disulfide bond links cysteine 106 and cysteine 204. Residue glycine 130 coordinates ATP. Residues 154-156 (KDQ) form an interaction with tRNA region. The active-site Cysteine persulfide intermediate is the cysteine 204. The interval 310-311 (RY) is interaction with tRNA.

The protein belongs to the MnmA/TRMU family.

It is found in the cytoplasm. The catalysed reaction is S-sulfanyl-L-cysteinyl-[protein] + uridine(34) in tRNA + AH2 + ATP = 2-thiouridine(34) in tRNA + L-cysteinyl-[protein] + A + AMP + diphosphate + H(+). Functionally, catalyzes the 2-thiolation of uridine at the wobble position (U34) of tRNA, leading to the formation of s(2)U34. The protein is tRNA-specific 2-thiouridylase MnmA of Desulforamulus reducens (strain ATCC BAA-1160 / DSM 100696 / MI-1) (Desulfotomaculum reducens).